Reading from the N-terminus, the 209-residue chain is Orotate phosphoribosyltransferase (209 aa).

5-phospho-alpha-D-ribose 1-diphosphate contacts are provided by residues Arg96, Lys100, His102, and 122 to 130 (EDLISTGGS). Ser126 contacts orotate.

It belongs to the purine/pyrimidine phosphoribosyltransferase family. PyrE subfamily. As to quaternary structure, homodimer. The cofactor is Mg(2+).

The enzyme catalyses orotidine 5'-phosphate + diphosphate = orotate + 5-phospho-alpha-D-ribose 1-diphosphate. It participates in pyrimidine metabolism; UMP biosynthesis via de novo pathway; UMP from orotate: step 1/2. In terms of biological role, catalyzes the transfer of a ribosyl phosphate group from 5-phosphoribose 1-diphosphate to orotate, leading to the formation of orotidine monophosphate (OMP). This Streptococcus pyogenes serotype M12 (strain MGAS2096) protein is Orotate phosphoribosyltransferase.